Reading from the N-terminus, the 489-residue chain is Cytochrome P450 302a1, mitochondrial (489 aa).

Cysteine 434 is a heme binding site.

Belongs to the cytochrome P450 family. Requires heme as cofactor. As to expression, complex coexpression pattern of dib (disembodied) and sad (shade) in the early embryo that restricts to the prothoracic gland cells of the developing ring gland during late embryogenesis. In larvae and adult, coexpression is seen in prothoracic gland and follicle cells of the ovary. In adults, coexpression is seen in the follicle cells.

The protein resides in the mitochondrion membrane. The enzyme catalyses 2,22-dideoxyecdysone + 2 reduced [adrenodoxin] + O2 + 2 H(+) = 2-deoxyecdysone + 2 oxidized [adrenodoxin] + H2O. Its pathway is steroid biosynthesis; ecdysteroid biosynthesis. In terms of biological role, required for CNS development; negatively regulates glial cell division in the embryonic midline. Involved in the metabolism of insect hormones; responsible for ecdysteroid C22-hydroxylase activity. May be involved in the breakdown of synthetic insecticides. The chain is Cytochrome P450 302a1, mitochondrial from Drosophila melanogaster (Fruit fly).